The primary structure comprises 23 residues: Phospholipase A1 verutoxin-1 (23 aa).

The protein belongs to the AB hydrolase superfamily. Lipase family. Post-translationally, contains six disulfide bonds. Expressed by the venom gland.

Its subcellular location is the secreted. It carries out the reaction a 1,2-diacyl-sn-glycero-3-phosphocholine + H2O = a 2-acyl-sn-glycero-3-phosphocholine + a fatty acid + H(+). The catalysed reaction is 1-(9Z-octadecenoyl)-2-hexadecanoyl-sn-glycero-3-phosphocholine + H2O = 2-hexadecanoyl-sn-glycero-3-phosphocholine + (9Z)-octadecenoate + H(+). It catalyses the reaction a 1-acyl-sn-glycero-3-phosphocholine + H2O = sn-glycerol 3-phosphocholine + a fatty acid + H(+). The protein operates within phospholipid metabolism. With respect to regulation, activity is maximal in the presence of calcium. However, unlike phospholipases A2 whose catalytic activity is strictly calcium-dependent, this enzyme shows considerable catalytic activity on phosphatidylcholine emulsified in calcium free solution; the catalytic activity of VT-1 assayed in the absence of calcium ions is 18-20% of that assayed in solution containing calcium ions. Catalyzes the hydrolysis of glycerophospholipids such as phosphatidylcholine (1,2-diacyl-sn-glycero-3-phosphocholine) and has a moderate activity to hydrolyze lysoglycerophospholipids such as lysophosphatidylcholine (1-acyl-sn-glycero-3-phosphocholine), but is unable to hydrolyze sphingomyelin. Liberates the fatty acid from the sn-1 position of 1,2-diacyl-sn-glycero-3-phosphocholine mainly, indicating phospholipase activity of the A1 type. In addition to acting as an allergen, it possesses a moderate hemolytic activity on red blood cells of mice (3% of hemolysis at 3.0 ug/ml). In Vespa velutina (Asian yellow-legged hornet), this protein is Phospholipase A1 verutoxin-1.